Consider the following 620-residue polypeptide: Protein translocase subunit SecD (620 aa).

The next 6 helical transmembrane spans lie at 10–30 (YLLI…NLYP), 464–484 (LWGM…FGVI), 488–507 (ALAF…GATL), 511–533 (GIAG…FSRI), 555–575 (FTAI…LYAM), and 582–602 (GFAV…IMVT).

Belongs to the SecD/SecF family. SecD subfamily. In terms of assembly, forms a complex with SecF. Part of the essential Sec protein translocation apparatus which comprises SecA, SecYEG and auxiliary proteins SecDF-YajC and YidC.

The protein localises to the cell inner membrane. In terms of biological role, part of the Sec protein translocase complex. Interacts with the SecYEG preprotein conducting channel. SecDF uses the proton motive force (PMF) to complete protein translocation after the ATP-dependent function of SecA. This chain is Protein translocase subunit SecD, found in Pseudomonas aeruginosa (strain ATCC 15692 / DSM 22644 / CIP 104116 / JCM 14847 / LMG 12228 / 1C / PRS 101 / PAO1).